A 259-amino-acid polypeptide reads, in one-letter code: Phosphatidylglycerol--prolipoprotein diacylglyceryl transferase (259 aa).

4 helical membrane passes run 10 to 30 (IGLL…LFAY), 50 to 70 (IISW…ILFY), 86 to 106 (WKGG…MYIF), and 112 to 132 (IKFL…IFLG). A 1,2-diacyl-sn-glycero-3-phospho-(1'-sn-glycerol) is bound at residue Arg133. 3 helical membrane passes run 169-189 (LYEA…LFFF), 197-217 (GMLF…IEFV), and 227-247 (ILFN…ILGI).

The protein belongs to the Lgt family.

It is found in the cell inner membrane. The catalysed reaction is L-cysteinyl-[prolipoprotein] + a 1,2-diacyl-sn-glycero-3-phospho-(1'-sn-glycerol) = an S-1,2-diacyl-sn-glyceryl-L-cysteinyl-[prolipoprotein] + sn-glycerol 1-phosphate + H(+). It functions in the pathway protein modification; lipoprotein biosynthesis (diacylglyceryl transfer). Catalyzes the transfer of the diacylglyceryl group from phosphatidylglycerol to the sulfhydryl group of the N-terminal cysteine of a prolipoprotein, the first step in the formation of mature lipoproteins. The polypeptide is Phosphatidylglycerol--prolipoprotein diacylglyceryl transferase (Ehrlichia ruminantium (strain Welgevonden)).